The sequence spans 222 residues: Countin-3 (222 aa).

The first 20 residues, 1 to 20 (MNKILSLFLITILLISKVMS), serve as a signal peptide directing secretion. One can recognise a Saposin B-type domain in the interval 21–105 (SSEECKLCTD…ESVKMCQYND (85 aa)). Disulfide bonds link C25–C101, C28–C95, and C56–C68. N-linked (GlcNAc...) asparagine glycosylation is found at N108, N134, and N218.

It belongs to the countin family.

It is found in the secreted. Functionally, may control the size of the multicellular structure. The protein is Countin-3 (ctnC) of Dictyostelium discoideum (Social amoeba).